Here is an 816-residue protein sequence, read N- to C-terminus: Phosphatidylinositol 4-kinase beta (816 aa).

3 disordered regions span residues M1–L30, E101–R120, and R250–S318. Residue G2 is modified to N-acetylglycine. The interval G2–I68 is interaction with ACBD3. The span at T10–L30 shows a compositional bias: low complexity. In terms of domain architecture, PIK helical spans C52–S242. The residue at position 258 (S258) is a Phosphoserine. T263 carries the phosphothreonine modification. 5 positions are modified to phosphoserine: S266, S275, S277, S284, and S294. Composition is skewed to polar residues over residues D278 to K297 and S306 to S318. S428 carries the post-translational modification Phosphoserine. T438 carries the post-translational modification Phosphothreonine. At S511 the chain carries Phosphoserine. A phosphothreonine mark is found at T517 and T519. The region spanning E535–T801 is the PI3K/PI4K catalytic domain. Positions V541 to G547 are G-loop. The catalytic loop stretch occupies residues Q668–N676. Positions H687 to T711 are activation loop.

This sequence belongs to the PI3/PI4-kinase family. Type III PI4K subfamily. As to quaternary structure, interacts with ARF1 and ARF3 in the Golgi complex, but not with ARF4, ARF5 or ARF6. Interacts with NCS1/FREQ in a calcium-independent manner. Interacts with CALN1/CABP8 and CALN2/CABP7; in a calcium-dependent manner; this interaction competes with NCS1/FREQ binding. Interacts with ACBD3. Interacts with ARMH3, YWHAB, YWHAE, YWHAG, YWHAH, YWHAQ, YWHAZ and SFN. Interacts with GGA2 (via VHS domain); the interaction is important for PI4KB location at the Golgi apparatus membrane. Interacts with ATG9A. The cofactor is Mg(2+). Mn(2+) is required as a cofactor.

It is found in the endomembrane system. The protein localises to the mitochondrion outer membrane. The protein resides in the rough endoplasmic reticulum membrane. Its subcellular location is the golgi apparatus. It localises to the golgi apparatus membrane. The enzyme catalyses a 1,2-diacyl-sn-glycero-3-phospho-(1D-myo-inositol) + ATP = a 1,2-diacyl-sn-glycero-3-phospho-(1D-myo-inositol 4-phosphate) + ADP + H(+). With respect to regulation, inhibited by wortmannin. Increased kinase activity upon interaction with NCS1/FREQ. Its function is as follows. Phosphorylates phosphatidylinositol (PI) in the first committed step in the production of the second messenger inositol-1,4,5,-trisphosphate (PIP). May regulate Golgi disintegration/reorganization during mitosis, possibly via its phosphorylation. Involved in Golgi-to-plasma membrane trafficking. May play an important role in the inner ear development. In Mus musculus (Mouse), this protein is Phosphatidylinositol 4-kinase beta (Pi4kb).